Reading from the N-terminus, the 641-residue chain is Acetyl-coenzyme A synthetase (641 aa).

Residues 186-189 (RGGK) and threonine 304 each bind CoA. Residues 380–382 (GEP), 404–409 (DTWWQT), aspartate 493, and arginine 508 each bind ATP. Serine 516 is a binding site for CoA. Position 519 (arginine 519) interacts with ATP. Positions 530, 532, and 535 each coordinate Mg(2+). Position 602 is an N6-acetyllysine (lysine 602).

It belongs to the ATP-dependent AMP-binding enzyme family. The cofactor is Mg(2+). In terms of processing, acetylated. Deacetylation by the SIR2-homolog deacetylase activates the enzyme.

It catalyses the reaction acetate + ATP + CoA = acetyl-CoA + AMP + diphosphate. Its function is as follows. Catalyzes the conversion of acetate into acetyl-CoA (AcCoA), an essential intermediate at the junction of anabolic and catabolic pathways. AcsA undergoes a two-step reaction. In the first half reaction, AcsA combines acetate with ATP to form acetyl-adenylate (AcAMP) intermediate. In the second half reaction, it can then transfer the acetyl group from AcAMP to the sulfhydryl group of CoA, forming the product AcCoA. The polypeptide is Acetyl-coenzyme A synthetase (Gamma-proteobacterium EBAC31A08).